Reading from the N-terminus, the 102-residue chain is Monothiol glutaredoxin-S9 (102 aa).

One can recognise a Glutaredoxin domain in the interval 1–101; sequence MDKVVRMSSE…PLVKPFQANL (101 aa). Cys-21 provides a ligand contact to [2Fe-2S] cluster.

It belongs to the glutaredoxin family. CC-type subfamily.

It localises to the cytoplasm. In terms of biological role, may only reduce GSH-thiol disulfides, but not protein disulfides. The chain is Monothiol glutaredoxin-S9 (GRXS9) from Arabidopsis thaliana (Mouse-ear cress).